The primary structure comprises 142 residues: Transcriptional regulator MraZ (142 aa).

SpoVT-AbrB domains follow at residues 5–51 (ASSL…PRTE) and 77–120 (AMDV…DKAT).

Belongs to the MraZ family. Forms oligomers.

It is found in the cytoplasm. The protein localises to the nucleoid. The chain is Transcriptional regulator MraZ from Delftia acidovorans (strain DSM 14801 / SPH-1).